Reading from the N-terminus, the 159-residue chain is RNA pyrophosphohydrolase (159 aa).

One can recognise a Nudix hydrolase domain in the interval Gly-6–Lys-149. The short motif at Gly-38 to Gly-59 is the Nudix box element.

It belongs to the Nudix hydrolase family. RppH subfamily. It depends on a divalent metal cation as a cofactor.

Functionally, accelerates the degradation of transcripts by removing pyrophosphate from the 5'-end of triphosphorylated RNA, leading to a more labile monophosphorylated state that can stimulate subsequent ribonuclease cleavage. The chain is RNA pyrophosphohydrolase from Stutzerimonas stutzeri (strain A1501) (Pseudomonas stutzeri).